A 121-amino-acid chain; its full sequence is Small ribosomal subunit protein uS13 (121 aa).

The tract at residues 88–121 is disordered; it reads GMRHRRGLPTRGQNTKNNARTRKGPAKSIAGKKK. Basic residues predominate over residues 106–121; it reads ARTRKGPAKSIAGKKK.

Belongs to the universal ribosomal protein uS13 family. In terms of assembly, part of the 30S ribosomal subunit. Forms a loose heterodimer with protein S19. Forms two bridges to the 50S subunit in the 70S ribosome.

In terms of biological role, located at the top of the head of the 30S subunit, it contacts several helices of the 16S rRNA. In the 70S ribosome it contacts the 23S rRNA (bridge B1a) and protein L5 of the 50S subunit (bridge B1b), connecting the 2 subunits; these bridges are implicated in subunit movement. Contacts the tRNAs in the A and P-sites. In Lactococcus lactis subsp. cremoris (strain MG1363), this protein is Small ribosomal subunit protein uS13.